Reading from the N-terminus, the 545-residue chain is uncharacterized protein (545 aa).

Residues M1 to R10 show a composition bias toward basic residues. Positions M1–P25 are disordered. WD repeat units follow at residues A417–M456 and G460–S501.

This is an uncharacterized protein from Caenorhabditis elegans.